The sequence spans 289 residues: Bidirectional sugar transporter SWEET11 (289 aa).

The Extracellular portion of the chain corresponds to 1-9 (MSLFNTENT). A helical membrane pass occupies residues 10–30 (WAFVFGLLGNLISFAVFLSPV). Positions 12–98 (FVFGLLGNLI…SMFLAYAPKP (87 aa)) constitute a MtN3/slv 1 domain. Over 31-43 (PTFYRIWKKKTTE) the chain is Cytoplasmic. A helical membrane pass occupies residues 44–64 (GFQSIPYVVALFSATLWLYYA). At 65–70 (TQKKDV) the chain is on the extracellular side. The helical transmembrane segment at 71 to 91 (FLLVTINAFGCFIETIYISMF) threads the bilayer. Topologically, residues 92 to 105 (LAYAPKPARMLTVK) are cytoplasmic. The chain crosses the membrane as a helical span at residues 106–126 (MLLLMNFGGFCAILLLCQFLV). The Extracellular segment spans residues 127–133 (KGATRAK). The chain crosses the membrane as a helical span at residues 134 to 154 (IIGGICVGFSVCVFAAPLSII). Positions 134–218 (IIGGICVGFS…ILYVVYKYCK (85 aa)) constitute a MtN3/slv 2 domain. At 155 to 167 (RTVIKTRSVEYMP) the chain is on the cytoplasmic side. The helical transmembrane segment at 168–188 (FSLSLTLTISAVIWLLYGLAL) threads the bilayer. At 189-192 (KDIY) the chain is on the extracellular side. Residues 193–213 (VAFPNVLGFALGALQMILYVV) traverse the membrane as a helical segment. Residues 214 to 289 (YKYCKTSPHL…GKQSSSAAAT (76 aa)) are Cytoplasmic-facing. Residues 266–289 (DRRAEIEDGQTPKHGKQSSSAAAT) form a disordered region. At Thr276 the chain carries Phosphothreonine.

Belongs to the SWEET sugar transporter family. In terms of assembly, forms homooligomers and heterooligomers with SWEET1, SWEET3, SWEET5, SWEET6, SWEET7, SWEET8, SWEET9, SWEET12, SWEET13, SWEET15 and SWEET17. As to expression, expressed in leaves, especially in phloem. Expressed in developing seeds.

It is found in the cell membrane. In terms of biological role, mediates both low-affinity uptake and efflux of sugar across the plasma membrane. Involved in phloem loading by mediating export from parenchyma cells feeding H(+)-coupled import into the sieve element/companion cell complex, thus contributing to the sucrose migration from sites of synthesis in the mesophyll to the phloem. Contributes to seed filling by triggering sucrose efflux involved in the transfer of sugars from seed coat to embryos. The sequence is that of Bidirectional sugar transporter SWEET11 from Arabidopsis thaliana (Mouse-ear cress).